Consider the following 662-residue polypeptide: UPF0313 protein CPR_1216 (662 aa).

The Radical SAM core domain maps to Ala296–Lys567. The [4Fe-4S] cluster site is built by Cys310, Cys314, and Cys317. Positions Arg597 to Arg662 are disordered. The span at Ser618–Lys632 shows a compositional bias: basic and acidic residues. The segment covering Arg633 to Lys644 has biased composition (basic residues).

This sequence belongs to the UPF0313 family. [4Fe-4S] cluster serves as cofactor.

The protein is UPF0313 protein CPR_1216 of Clostridium perfringens (strain SM101 / Type A).